A 173-amino-acid polypeptide reads, in one-letter code: CASP-like protein 2D1 (173 aa).

Residues 1–9 lie on the Cytoplasmic side of the membrane; that stretch reads MAPLLKLLD. A helical membrane pass occupies residues 10–29; that stretch reads SSLRVSVIPLSAATIWLTVT. At 30 to 50 the chain is on the extracellular side; sequence NHQDNSSYGNLKYSNIMGLKY. N-linked (GlcNAc...) asparagine glycosylation is present at N34. Residues 51-71 traverse the membrane as a helical segment; the sequence is MVCISAICASYAFVAAVSIWI. The Cytoplasmic segment spans residues 72-86; it reads KCLVNKVWLFFVSDQ. Residues 87 to 107 traverse the membrane as a helical segment; that stretch reads IIAYLMVTSVAAAMEILYIAY. The Extracellular segment spans residues 108–131; sequence NGDQKVTWSEACTSYGKFCNGMKT. Residues 132–152 form a helical membrane-spanning segment; sequence ALILHALTLCFFIVLAVISAY. Residues 153-173 lie on the Cytoplasmic side of the membrane; sequence RAFSMYQPPVSSKETVEGDAT.

It belongs to the Casparian strip membrane proteins (CASP) family. In terms of assembly, homodimer and heterodimers.

The protein resides in the cell membrane. This is CASP-like protein 2D1 from Ricinus communis (Castor bean).